The chain runs to 600 residues: ATP-dependent lipid A-core flippase (600 aa).

4 helical membrane passes run 27-47 (ISLF…QPML), 83-103 (LLII…NYFL), 174-194 (LLFM…LIAV), and 267-287 (PLLQ…VLYL). Residues 31–322 (LISIVGFLIF…LSEVSSTIQK (292 aa)) form the ABC transmembrane type-1 domain. An ABC transporter domain is found at 354–590 (LDVRNLSFTY…NGYYARLNAM (237 aa)). 388 to 395 (GRSGSGKS) serves as a coordination point for ATP.

Belongs to the ABC transporter superfamily. Lipid exporter (TC 3.A.1.106) family. In terms of assembly, homodimer.

Its subcellular location is the cell inner membrane. It carries out the reaction ATP + H2O + lipid A-core oligosaccharideSide 1 = ADP + phosphate + lipid A-core oligosaccharideSide 2.. Involved in lipopolysaccharide (LPS) biosynthesis. Translocates lipid A-core from the inner to the outer leaflet of the inner membrane. Transmembrane domains (TMD) form a pore in the inner membrane and the ATP-binding domain (NBD) is responsible for energy generation. This is ATP-dependent lipid A-core flippase from Pseudomonas fluorescens (strain Pf0-1).